The following is a 248-amino-acid chain: Type III pantothenate kinase (248 aa).

An ATP-binding site is contributed by 6–13 (ELGNSQLK). Substrate is bound by residues tyrosine 94 and 101-104 (GVDR). Catalysis depends on aspartate 103, which acts as the Proton acceptor. Aspartate 123 contributes to the K(+) binding site. Threonine 126 provides a ligand contact to ATP. Substrate is bound at residue threonine 179.

Belongs to the type III pantothenate kinase family. As to quaternary structure, homodimer. It depends on NH4(+) as a cofactor. K(+) is required as a cofactor.

The protein resides in the cytoplasm. The catalysed reaction is (R)-pantothenate + ATP = (R)-4'-phosphopantothenate + ADP + H(+). It participates in cofactor biosynthesis; coenzyme A biosynthesis; CoA from (R)-pantothenate: step 1/5. In terms of biological role, catalyzes the phosphorylation of pantothenate (Pan), the first step in CoA biosynthesis. The chain is Type III pantothenate kinase from Hydrogenovibrio crunogenus (strain DSM 25203 / XCL-2) (Thiomicrospira crunogena).